The sequence spans 352 residues: Glutamine synthetase cytosolic isozyme (352 aa).

Residues 19–98 (FIAEYIWIDA…VMCDTYTPAG (80 aa)) form the GS beta-grasp domain. A GS catalytic domain is found at 105-352 (KRCNAAKIFS…TSMIAETTIL (248 aa)).

The protein belongs to the glutamine synthetase family. Homooctamer.

It is found in the cytoplasm. It carries out the reaction L-glutamate + NH4(+) + ATP = L-glutamine + ADP + phosphate + H(+). The protein is Glutamine synthetase cytosolic isozyme (GLN1) of Daucus carota (Wild carrot).